Here is a 416-residue protein sequence, read N- to C-terminus: Major facilitator superfamily domain-containing protein 3 (416 aa).

The next 12 membrane-spanning stretches (helical) occupy residues 10–30 (GLYL…PILL), 40–60 (VGLT…APLV), 68–88 (VWLT…AVLP), 99–119 (TTVM…DVAL), 139–158 (QVVA…LVFF), 170–190 (LTAT…LGRL), 204–224 (YLLQ…FVLT), 252–272 (LWSG…GGAL), 295–315 (LGGL…GASL), 324–344 (AALL…TATF), 365–385 (FLAT…GVLA), and 392–412 (LCFA…RLAP).

This sequence belongs to the major facilitator superfamily.

The protein localises to the membrane. The sequence is that of Major facilitator superfamily domain-containing protein 3 (Mfsd3) from Rattus norvegicus (Rat).